The following is a 150-amino-acid chain: Globin-3 (150 aa).

The region spanning 11 to 150 is the Globin domain; sequence PLTAADKTKI…IICILLNSAY (140 aa). Heme b contacts are provided by His-74 and His-106.

It belongs to the globin family. In terms of assembly, monomer.

This is Globin-3 from Mordacia mordax (Southern hemisphere lamprey).